The primary structure comprises 118 residues: MIDLIKYPVINFKSYRALVLNNQYMFNVDLRLTKPQIKKLIEQYFEVNVISVNTHRPPRKKRLYIQTSPGYKKRYKRVIITLQKDQEIPYIKSLMASNLAAAMQRVQNAQTSPNSNEA.

It belongs to the universal ribosomal protein uL23 family. In terms of assembly, part of the 50S ribosomal subunit.

The protein resides in the plastid. It is found in the chloroplast. In terms of biological role, binds to 23S rRNA. This chain is Large ribosomal subunit protein uL23c (rpl23), found in Stigeoclonium helveticum (Green alga).